Reading from the N-terminus, the 324-residue chain is CYFIP-related Rac1 interactor B (324 aa).

A lipid anchor (N-myristoyl glycine) is attached at glycine 2. Lysine 74 is covalently cross-linked (Glycyl lysine isopeptide (Lys-Gly) (interchain with G-Cter in ubiquitin)).

This sequence belongs to the CYRI family. In terms of assembly, interacts with RAC1 (GTP-bound form preferentially). Post-translationally, ubiquitinated at Lys-74 upon Salmonella bacterial infection. As to expression, expressed in pancreatic ducts (at protein level).

It is found in the membrane. It localises to the mitochondrion. In terms of biological role, negatively regulates RAC1 signaling and RAC1-driven cytoskeletal remodeling. Regulates chemotaxis, cell migration and epithelial polarization by controlling the polarity, plasticity, duration and extent of protrusions. Limits Rac1 mediated activation of the Scar/WAVE complex, focuses protrusion signals and regulates pseudopod complexity by inhibiting Scar/WAVE-induced actin polymerization. Protects against Salmonella bacterial infection. Attenuates processes such as macropinocytosis, phagocytosis and cell migration and restrict sopE-mediated bacterial entry. Also restricts infection mediated by Mycobacterium tuberculosis and Listeria monocytogenes. Involved in the regulation of mitochondrial dynamics and oxidative stress. This Mus musculus (Mouse) protein is CYFIP-related Rac1 interactor B (Cyrib).